The following is a 208-amino-acid chain: Small ribosomal subunit protein uS4 (208 aa).

Residues 98–161 (QRLDNVVYRM…KTNSQILRAI (64 aa)) form the S4 RNA-binding domain.

This sequence belongs to the universal ribosomal protein uS4 family. Part of the 30S ribosomal subunit. Contacts protein S5. The interaction surface between S4 and S5 is involved in control of translational fidelity.

Functionally, one of the primary rRNA binding proteins, it binds directly to 16S rRNA where it nucleates assembly of the body of the 30S subunit. With S5 and S12 plays an important role in translational accuracy. This chain is Small ribosomal subunit protein uS4, found in Sulfurovum sp. (strain NBC37-1).